The sequence spans 320 residues: Cytochrome f (320 aa).

An N-terminal signal peptide occupies residues 1-35 (MQTRNTFSWIREEITRSISVSLMIYIITWASISGA). Heme is bound by residues Tyr-36, Cys-56, Cys-59, and His-60. Residues 286–306 (VQGLLFFLGSVVLAQIFLVLK) traverse the membrane as a helical segment.

Belongs to the cytochrome f family. As to quaternary structure, the 4 large subunits of the cytochrome b6-f complex are cytochrome b6, subunit IV (17 kDa polypeptide, petD), cytochrome f and the Rieske protein, while the 4 small subunits are PetG, PetL, PetM and PetN. The complex functions as a dimer. Requires heme as cofactor.

The protein localises to the plastid. It localises to the chloroplast thylakoid membrane. In terms of biological role, component of the cytochrome b6-f complex, which mediates electron transfer between photosystem II (PSII) and photosystem I (PSI), cyclic electron flow around PSI, and state transitions. This chain is Cytochrome f, found in Capsella bursa-pastoris (Shepherd's purse).